Consider the following 454-residue polypeptide: Repulsive guidance molecule A (454 aa).

The first 47 residues, 1–47 (MQPPRERLVVTGRAGWMGMGRGAGRSALGLWPTLAFLLCSFPAAISP), serve as a signal peptide directing secretion. Residues 48–169 (CKILKCNSEF…NYTHCGLFGD (122 aa)) constitute a propeptide, removed in mature form. Over residues 114-126 (HNCSKDGPTSQPR) the composition is skewed to polar residues. The tract at residues 114-141 (HNCSKDGPTSQPRVRTLPPAGDSQERSD) is disordered. N-linked (GlcNAc...) asparagine glycans are attached at residues Asn-115 and Asn-160. Disulfide bonds link Cys-146–Cys-227 and Cys-164–Cys-316. N-linked (GlcNAc...) asparagine glycosylation is present at Asn-388. Residue Ala-427 is the site of GPI-anchor amidated alanine attachment. The propeptide at 428 to 454 (AAATTFPLAPQILLGTIPLLVLLPVLW) is removed in mature form.

It belongs to the repulsive guidance molecule (RGM) family. In terms of assembly, interacts with NEO1, BMP2 and BMP4. In terms of processing, autocatalytically cleaved at low pH; the two chains remain linked via two disulfide bonds. In terms of tissue distribution, expressed in gradient in periventricular layers of the developing nervous system. In adult, expressed in scattered cells throughout the brain.

Its subcellular location is the cell membrane. Its function is as follows. Member of the repulsive guidance molecule (RGM) family that performs several functions in the developing and adult nervous system. Regulates cephalic neural tube closure, inhibits neurite outgrowth and cortical neuron branching, and the formation of mature synapses. Binding to its receptor NEO1/neogenin induces activation of RHOA-ROCK1/Rho-kinase signaling pathway through UNC5B-ARHGEF12/LARG-PTK2/FAK1 cascade, leading to collapse of the neuronal growth cone and neurite outgrowth inhibition. Furthermore, RGMA binding to NEO1/neogenin leads to HRAS inactivation by influencing HRAS-PTK2/FAK1-AKT1 pathway. It also functions as a bone morphogenetic protein (BMP) coreceptor that may signal through SMAD1, SMAD5, and SMAD8. The protein is Repulsive guidance molecule A (Rgma) of Mus musculus (Mouse).